A 211-amino-acid chain; its full sequence is Holliday junction branch migration complex subunit RuvA (211 aa).

The tract at residues 1-63 is domain I; the sequence is MIASLRGTVI…EDSQTLYVFK (63 aa). The interval 64 to 142 is domain II; sequence DADEKRAFAT…DLGEIADTGA (79 aa). The tract at residues 143 to 157 is flexible linker; the sequence is VGAAGAVGDGGDGQA. Residues 158-211 are domain III; it reads VAPDVREQVLEALVGLGFTESKAGTTIEAVLSQWSAPQAPDASGLLRASLAAIK.

The protein belongs to the RuvA family. In terms of assembly, homotetramer. Forms an RuvA(8)-RuvB(12)-Holliday junction (HJ) complex. HJ DNA is sandwiched between 2 RuvA tetramers; dsDNA enters through RuvA and exits via RuvB. An RuvB hexamer assembles on each DNA strand where it exits the tetramer. Each RuvB hexamer is contacted by two RuvA subunits (via domain III) on 2 adjacent RuvB subunits; this complex drives branch migration. In the full resolvosome a probable DNA-RuvA(4)-RuvB(12)-RuvC(2) complex forms which resolves the HJ.

It is found in the cytoplasm. In terms of biological role, the RuvA-RuvB-RuvC complex processes Holliday junction (HJ) DNA during genetic recombination and DNA repair, while the RuvA-RuvB complex plays an important role in the rescue of blocked DNA replication forks via replication fork reversal (RFR). RuvA specifically binds to HJ cruciform DNA, conferring on it an open structure. The RuvB hexamer acts as an ATP-dependent pump, pulling dsDNA into and through the RuvAB complex. HJ branch migration allows RuvC to scan DNA until it finds its consensus sequence, where it cleaves and resolves the cruciform DNA. This chain is Holliday junction branch migration complex subunit RuvA, found in Corynebacterium jeikeium (strain K411).